A 515-amino-acid polypeptide reads, in one-letter code: ATP synthase subunit alpha (515 aa).

Position 171-178 (171-178 (GDRQTGKT)) interacts with ATP.

The protein belongs to the ATPase alpha/beta chains family. F-type ATPases have 2 components, CF(1) - the catalytic core - and CF(0) - the membrane proton channel. CF(1) has five subunits: alpha(3), beta(3), gamma(1), delta(1), epsilon(1). CF(0) has three main subunits: a(1), b(2) and c(9-12). The alpha and beta chains form an alternating ring which encloses part of the gamma chain. CF(1) is attached to CF(0) by a central stalk formed by the gamma and epsilon chains, while a peripheral stalk is formed by the delta and b chains.

It is found in the cell inner membrane. The enzyme catalyses ATP + H2O + 4 H(+)(in) = ADP + phosphate + 5 H(+)(out). Functionally, produces ATP from ADP in the presence of a proton gradient across the membrane. The alpha chain is a regulatory subunit. This Xanthomonas oryzae pv. oryzae (strain MAFF 311018) protein is ATP synthase subunit alpha.